We begin with the raw amino-acid sequence, 157 residues long: Catabolic 3-dehydroquinase (157 aa).

Tyr27 serves as the catalytic Proton acceptor. Substrate-binding residues include Asn80, His86, and Asp93. His106 (proton donor) is an active-site residue. Substrate contacts are provided by residues 107 to 108 (VS) and Arg117.

Belongs to the type-II 3-dehydroquinase family. In terms of assembly, homododecamer. Adopts a ring-like structure, composed of an arrangement of two hexameric rings stacked on top of one another.

The enzyme catalyses 3-dehydroquinate = 3-dehydroshikimate + H2O. It functions in the pathway aromatic compound metabolism; 3,4-dihydroxybenzoate biosynthesis; 3,4-dihydroxybenzoate from 3-dehydroquinate: step 1/2. Is involved in the catabolism of quinate. Allows the utilization of quinate as carbon source via the beta-ketoadipate pathway. The polypeptide is Catabolic 3-dehydroquinase (Pyricularia oryzae (strain 70-15 / ATCC MYA-4617 / FGSC 8958) (Rice blast fungus)).